The chain runs to 474 residues: ATP-dependent rRNA helicase RRP3 (474 aa).

Basic residues predominate over residues 1 to 10 (MPSMKRRKLS). The interval 1-43 (MPSMKRRKLSHTPPQGEAEDGFSDSETSQASLQETPGNDEKIE) is disordered. Polar residues predominate over residues 24-36 (DSETSQASLQETP). The Q motif signature appears at 48–76 (KSFKDLGIIDSLCEACDSLGYKAPTQIQA). One can recognise a Helicase ATP-binding domain in the interval 79–250 (IPLALQGRDL…RASLSNPLRV (172 aa)). ATP is bound at residue 92 to 99 (AETGSGKT). A DEAD box motif is present at residues 198-201 (DEAD). The 145-residue stretch at 278–422 (YLIYLLNEFP…EYKVEKEEVM (145 aa)) folds into the Helicase C-terminal domain. Residues 442 to 474 (LHENRGKKGATLRNRRIGKGAKRSRDEMDREEG) are disordered. A compositionally biased stretch (basic residues) spans 448–463 (KKGATLRNRRIGKGAK). Positions 464-474 (RSRDEMDREEG) are enriched in basic and acidic residues.

This sequence belongs to the DEAD box helicase family. DDX47/RRP3 subfamily. As to quaternary structure, interacts with the SSU processome.

It is found in the nucleus. It catalyses the reaction ATP + H2O = ADP + phosphate + H(+). In terms of biological role, ATP-dependent rRNA helicase required for pre-ribosomal RNA processing. Involved in the maturation of the 35S-pre-rRNA and to its cleavage to mature 18S rRNA. This chain is ATP-dependent rRNA helicase RRP3, found in Coccidioides immitis (strain RS) (Valley fever fungus).